A 129-amino-acid chain; its full sequence is Large ribosomal subunit protein bL20 (129 aa).

It belongs to the bacterial ribosomal protein bL20 family.

Its function is as follows. Binds directly to 23S ribosomal RNA and is necessary for the in vitro assembly process of the 50S ribosomal subunit. It is not involved in the protein synthesizing functions of that subunit. This Mycobacterium leprae (strain Br4923) protein is Large ribosomal subunit protein bL20.